The chain runs to 148 residues: Cytochrome c oxidase subunit 4, mitochondrial (148 aa).

The N-terminal 24 residues, 1–24 (MFALRSIRSATKAFQTTSIVSQRG), are a transit peptide targeting the mitochondrion.

Slime mold cytochrome c oxidase consists of at least seven different polypeptides species, subunits I, II, III, IV, V, VI, and VIIe/s in order of MW.

It localises to the mitochondrion inner membrane. The catalysed reaction is 4 Fe(II)-[cytochrome c] + O2 + 8 H(+)(in) = 4 Fe(III)-[cytochrome c] + 2 H2O + 4 H(+)(out). In terms of biological role, this protein is one of the nuclear-coded polypeptide chains of cytochrome c oxidase, the terminal oxidase in mitochondrial electron transport. The polypeptide is Cytochrome c oxidase subunit 4, mitochondrial (cxdA) (Dictyostelium discoideum (Social amoeba)).